We begin with the raw amino-acid sequence, 449 residues long: Glucose-6-phosphate isomerase (449 aa).

Residue glutamate 291 is the Proton donor of the active site. Catalysis depends on residues histidine 312 and lysine 426.

This sequence belongs to the GPI family.

Its subcellular location is the cytoplasm. The catalysed reaction is alpha-D-glucose 6-phosphate = beta-D-fructose 6-phosphate. Its pathway is carbohydrate biosynthesis; gluconeogenesis. The protein operates within carbohydrate degradation; glycolysis; D-glyceraldehyde 3-phosphate and glycerone phosphate from D-glucose: step 2/4. Functionally, catalyzes the reversible isomerization of glucose-6-phosphate to fructose-6-phosphate. This Streptococcus mutans serotype c (strain ATCC 700610 / UA159) protein is Glucose-6-phosphate isomerase.